A 548-amino-acid polypeptide reads, in one-letter code: MGFEELLEQVGGFGPFQLRNVALLALPRVLLPLHFLLPIFLAAVPAHRCALPGAPANFSHQDVWLEAHLPREPDGTLSSCLRFAYPQALPNTTLGEERQSRGELEDEPATVPCSQGWEYDHSEFSSTIATESQWDLVCEQKGLNRAASTFFFAGVLVGAVAFGYLSDRFGRRRLLLVAYVSTLVLGLASAASVSYVMFAITRTLTGSALAGFTIIVMPLELEWLDVEHRTVAGVLSSTFWTGGVMLLALVGYLIRDWRWLLLAVTLPCAPGILSLWWVPESARWLLTQGHVKEAHRYLLHCARLNGRPVCEDSFSQEAVSKVAAGERVVRRPSYLDLFRTPRLRHISLCCVVVWFGVNFSYYGLSLDVSGLGLNVYQTQLLFGAVELPSKLLVYLSVRYAGRRLTQAGTLLGTALAFGTRLLVSSDMKSWSTVLAVMGKAFSEAAFTTAYLFTSELYPTVLRQTGMGLTALVGRLGGSLAPLAALLDGVWLSLPKLTYGGIALLAAGTALLLPETRQAQLPETIQDVERKSAPTSLQEEEMPMKQVQN.

The chain crosses the membrane as a helical span at residues 21–41 (VALLALPRVLLPLHFLLPIFL). N-linked (GlcNAc...) asparagine glycosylation is present at Asn91. The next 11 membrane-spanning stretches (helical) occupy residues 146-166 (AAST…GYLS), 180-200 (VSTL…MFAI), 204-224 (LTGS…LEWL), 234-254 (VLSS…GYLI), 259-279 (WLLL…WWVP), 346-366 (ISLC…GLSL), 376-397 (YQTQ…YLSV), 404-423 (LTQA…RLLV), 432-452 (TVLA…AYLF), 466-486 (MGLT…AALL), and 493-513 (LPKL…LLLP). Phe441 (important for glutamate counteranion efflux) is an active-site residue. The disordered stretch occupies residues 522–548 (ETIQDVERKSAPTSLQEEEMPMKQVQN).

Belongs to the major facilitator (TC 2.A.1) superfamily. Organic cation transporter (TC 2.A.1.19) family. Mainly expressed in liver and kidney. In kidney, expressed in proximal tubular cells. Also expressed in pancreas, small intestine, spinal cord, lung, brain and heart. Expressed in fetal liver.

Its subcellular location is the basolateral cell membrane. It localises to the apical cell membrane. The protein resides in the cell membrane. It is found in the cytoplasm. The protein localises to the cytosol. It catalyses the reaction orotate(out) + L-glutamate(in) = orotate(in) + L-glutamate(out). The enzyme catalyses 3',5'-cyclic GMP(in) = 3',5'-cyclic GMP(out). It carries out the reaction GMP(in) = GMP(out). The catalysed reaction is 2'-deoxyguanosine(in) = 2'-deoxyguanosine(out). It catalyses the reaction GDP(in) = GDP(out). The enzyme catalyses guanosine(in) = guanosine(out). It carries out the reaction GTP(in) = GTP(out). The catalysed reaction is 3',5'-cyclic AMP(in) = 3',5'-cyclic AMP(out). It catalyses the reaction creatinine(in) = creatinine(out). The enzyme catalyses prostaglandin E2(out) = prostaglandin E2(in). It carries out the reaction 2-oxoglutarate(in) = 2-oxoglutarate(out). The catalysed reaction is glutarate(in) = glutarate(out). It catalyses the reaction urate(out) = urate(in). The enzyme catalyses estrone 3-sulfate(out) = estrone 3-sulfate(in). It carries out the reaction prostaglandin F2alpha(out) = prostaglandin F2alpha(in). Its function is as follows. Functions as a Na(+)-independent bidirectional multispecific transporter. Contributes to the renal and hepatic elimination of endogenous organic compounds from the systemic circulation into the urine and bile, respectively. Capable of transporting a wide range of purine and pyrimidine nucleobases, nucleosides and nucleotides, with cGMP, 2'deoxyguanosine and GMP being the preferred substrates. Functions as a pH- and chloride-independent cGMP bidirectional facilitative transporter that can regulate both intracellular and extracellular levels of cGMP and may be involved in cGMP signaling pathways. Mediates orotate/glutamate bidirectional exchange and most likely display a physiological role in hepatic release of glutamate into the blood. Involved in renal secretion and possible reabsorption of creatinine. Able to uptake prostaglandin E2 (PGE2) and may contribute to PGE2 renal excretion. Also transports alpha-ketoglutarate and urate. Apart from the orotate/glutamate exchange, the counterions for the uptake of other SLC22A7/OAT2 substrates remain to be identified. Non functional transporter. In terms of biological role, involved in the uptake of prostaglandin F2-alpha (PGF2-alpha). This Homo sapiens (Human) protein is Solute carrier family 22 member 7.